The following is a 648-amino-acid chain: MKQNPAKTARMWIIICLLFVLGQATDNDRDFKMCGKWLHGIAPQNLEYDLKTGCERIEISANESTLSIQGRITAKCTQSSSIQLDSNPHQNQSHFCVFWEPLLDLLIVEVNGKNHTLCKPNGLQGTCCTDLSQGVQDNAHMYGIVNGSVKGDIITGDLKGNYIFDGAHINCKEKFCDEARLKPRGANMIEEVVMRFNAKGRVDLPCAQGTVIEMDEEFTGHNFTVPAPRFVDANTIPSVYIPSSLRSVSRRKSKVVCTYYKNKTLFERGPSKSALLDDIVGLSVENETIRNLIEPVKIRFHHRPFAPDSSGRCVSWDTKQDNEVNWKDDGCDTVKINEEQTECHCNHLTYFAILVQVEQKSTVRHLKALTFITAVGCAVSLVSCLVLFYWLCKRRRGKKNQISLVHRGLVVAIFLLCLFFILTGILANVANETVCQLTGSLLHYGLLSTLCWMAMEVFHTFLLVRKVFNSPLPIWIFYLMGFGFPFLLVSILLSVGDIYGERKIKPSDDVNNPYRMCWMTEGDKSQLAHYIINIGLLAVVVSSGLVMLFLVVREIRNRPDWKKIHVAFLSIWGLTCLYGTTWALGFLDFGPFSEVTLFLFCIINSLQGFFLMLRYYALERMKKKDVSSSDGSSSGSSKQHMLQTNEKS.

The first 24 residues, 1-24 (MKQNPAKTARMWIIICLLFVLGQA), serve as a signal peptide directing secretion. Over 25-370 (TDNDRDFKMC…STVRHLKALT (346 aa)) the chain is Extracellular. A disulfide bond links cysteine 34 and cysteine 96. N-linked (GlcNAc...) asparagine glycosylation is found at asparagine 62, asparagine 91, asparagine 114, asparagine 146, asparagine 222, asparagine 262, and asparagine 286. An intrachain disulfide couples cysteine 127 to cysteine 176. In terms of domain architecture, GAIN-B spans 214–361 (MDEEFTGHNF…AILVQVEQKS (148 aa)). Disulfide bonds link cysteine 313–cysteine 343 and cysteine 331–cysteine 345. The interval 313–361 (CVSWDTKQDNEVNWKDDGCDTVKINEEQTECHCNHLTYFAILVQVEQKS) is GPS. The interval 349 to 361 (TYFAILVQVEQKS) is stachel. A helical transmembrane segment spans residues 371 to 391 (FITAVGCAVSLVSCLVLFYWL). Over 392-408 (CKRRRGKKNQISLVHRG) the chain is Cytoplasmic. A helical membrane pass occupies residues 409 to 429 (LVVAIFLLCLFFILTGILANV). The Extracellular portion of the chain corresponds to 430–443 (ANETVCQLTGSLLH). A glycan (N-linked (GlcNAc...) asparagine) is linked at asparagine 431. Residues 444-464 (YGLLSTLCWMAMEVFHTFLLV) traverse the membrane as a helical segment. The Cytoplasmic segment spans residues 465–471 (RKVFNSP). Residues 472–492 (LPIWIFYLMGFGFPFLLVSIL) form a helical membrane-spanning segment. Residues 493–530 (LSVGDIYGERKIKPSDDVNNPYRMCWMTEGDKSQLAHY) lie on the Extracellular side of the membrane. The chain crosses the membrane as a helical span at residues 531 to 551 (IINIGLLAVVVSSGLVMLFLV). The Cytoplasmic portion of the chain corresponds to 552-563 (VREIRNRPDWKK). The helical transmembrane segment at 564–586 (IHVAFLSIWGLTCLYGTTWALGF) threads the bilayer. At 587–595 (LDFGPFSEV) the chain is on the extracellular side. Residues 596–618 (TLFLFCIINSLQGFFLMLRYYAL) traverse the membrane as a helical segment. The Cytoplasmic portion of the chain corresponds to 619-648 (ERMKKKDVSSSDGSSSGSSKQHMLQTNEKS).

This sequence belongs to the G-protein coupled receptor 2 family. LN-TM7 subfamily. In terms of assembly, heterodimer of 2 chains generated by proteolytic processing; the large extracellular N-terminal fragment (ADGRG1 NT) and the membrane-bound C-terminal fragment (ADGRG1-CT) predominantly remain associated and non-covalently linked. Post-translationally, autoproteolytically cleaved into 2 fragments; the large extracellular N-terminal fragment (ADGRG1 NT) and the membrane-bound C-terminal fragment (ADGRG1 CT) predominantly remain associated and non-covalently linked.

It is found in the cell membrane. With respect to regulation, forms a heterodimer of 2 chains generated by proteolytic processing that remain associated through non-covalent interactions mediated by the GAIN-B domain. In the inactivated receptor, the Stachel sequence (also named stalk) is embedded in the GAIN-B domain, where it adopts a beta-strand conformation. On activation, the Stachel moves into the 7 transmembrane region and adopts a twisted hook-shaped configuration that forms contacts within the receptor, leading to coupling of a G-alpha protein, which activates signaling. The cleaved GAIN-B and N-terminal domains can then dissociate from the rest of the receptor. Adhesion G-protein coupled receptor (aGPCR), which is involved in oligodendrocyte development and maintenance of peripheral myelin. Ligand binding causes a conformation change that triggers signaling via guanine nucleotide-binding proteins (G proteins) and modulates the activity of downstream effectors, such as RhoA pathway. Adgrg1 is coupled to G(12) and/or G(13) G proteins (gna12 and gna13, respectively) and mediates the activation Rho small GTPases. Adgrg1-dependent RhoA signaling promotes timely radial sorting of axons. Required to establish proper myelin thickness and facilitate organization of the myelin sheath in the mature peripheral nervous system. This Danio rerio (Zebrafish) protein is Adhesion G-protein coupled receptor G1.